The following is a 258-amino-acid chain: Indole-3-glycerol phosphate synthase (258 aa).

Belongs to the TrpC family.

It carries out the reaction 1-(2-carboxyphenylamino)-1-deoxy-D-ribulose 5-phosphate + H(+) = (1S,2R)-1-C-(indol-3-yl)glycerol 3-phosphate + CO2 + H2O. Its pathway is amino-acid biosynthesis; L-tryptophan biosynthesis; L-tryptophan from chorismate: step 4/5. In Legionella pneumophila (strain Lens), this protein is Indole-3-glycerol phosphate synthase.